The chain runs to 1013 residues: Receptor-type tyrosine-protein phosphatase N2 (1013 aa).

A signal peptide spans 1 to 19 (MALPLLLLLLLLLPPRVLP). The involved in localization to secretory granules; interaction with CPE stretch occupies residues 1 to 419 (MALPLLLLLL…PGALPFAKPL (419 aa)). Residues 20–613 (AAPSSVPHGR…QAEQEDSTKF (594 aa)) are Extracellular-facing. Disordered stretches follow at residues 116–137 (RHPE…ERRY), 273–302 (MPRP…TGEG), 342–382 (DHRG…VQDD), and 401–487 (LQDH…SLPA). Over residues 419 to 430 (LKMERKKSERPE) the composition is skewed to basic and acidic residues. Ser-434 and Ser-435 each carry phosphoserine. A glycan (N-linked (GlcNAc...) asparagine) is linked at Asn-562. A helical transmembrane segment spans residues 614–634 (IALTLVSLACILGVLLASGLI). Topologically, residues 635 to 1013 (YCLRHSSQHR…VNAILKALPQ (379 aa)) are cytoplasmic. The short motif at 664–673 (YQELCRQRMA) is the Tyrosine-based internalization motif element. The segment at 673–717 (ATRPPDRPEGPHTSRISSVSSQFSDGPMPSPSARSSASSWSEEPV) is disordered. The span at 686-696 (SRISSVSSQFS) shows a compositional bias: polar residues. Residues Ser-690 and Ser-696 each carry the phosphoserine modification. Positions 703 to 717 (PSARSSASSWSEEPV) are enriched in low complexity. The Tyrosine-protein phosphatase domain maps to 743–1003 (LEKEWEALCA…EFALTAVAEE (261 aa)). Substrate is bound by residues Asp-911 and 943–949 (CSDGAGR). The Phosphocysteine intermediate role is filled by Cys-943. N6-acetyllysine is present on Lys-968. Gln-988 is a substrate binding site. Positions 1002–1008 (EEVNAIL) match the Leucine-based sorting signal motif.

Belongs to the protein-tyrosine phosphatase family. Receptor class 8 subfamily. Self-associates. Interacts (via cytoplasmic domain) with PTPRN (via cytoplasmic domain). Interacts (precursor form) with CPE. Interacts with HAP1. Interacts with AP2A1 or AP2A2 and AP1G1; indicative for an association with adaptor protein complex 2 (AP-2) and adaptor protein complex 1 (AP-1). Interacts with AP2M1; indicative for an association with adaptor protein complex 2 (AP-2). Interacts with MYO5A. In terms of processing, subject to proteolytic cleavage at multiple sites. As to expression, detected in pancreatic islets and adrenal medulla.

Its subcellular location is the cytoplasmic vesicle. It is found in the secretory vesicle membrane. The protein resides in the secretory vesicle. The protein localises to the synaptic vesicle membrane. The catalysed reaction is O-phospho-L-tyrosyl-[protein] + H2O = L-tyrosyl-[protein] + phosphate. Functionally, plays a role in vesicle-mediated secretory processes. Required for normal accumulation of secretory vesicles in hippocampus, pituitary and pancreatic islets. Required for the accumulation of normal levels of insulin-containing vesicles and preventing their degradation. Plays a role in insulin secretion in response to glucose stimuli. Required for normal accumulation of the neurotransmitters norepinephrine, dopamine and serotonin in the brain. In females, but not in males, required for normal accumulation and secretion of pituitary hormones, such as luteinizing hormone (LH) and follicle-stimulating hormone (FSH). Required to maintain normal levels of renin expression and renin release. May regulate catalytic active protein-tyrosine phosphatases such as PTPRA through dimerization. Has phosphatidylinositol phosphatase activity; the PIPase activity is involved in its ability to regulate insulin secretion. Can dephosphorylate phosphatidylinositol 4,5-biphosphate, phosphatidylinositol 5-phosphate and phosphatidylinositol 3-phosphate. Regulates PI(4,5)P2 level in the plasma membrane and localization of cofilin at the plasma membrane and thus is indirectly involved in regulation of actin dynamics related to cell migration and metastasis; upon hydrolysis of PI(4,5)P2 cofilin is released from the plasma membrane and acts in the cytoplasm in severing F-actin filaments. This chain is Receptor-type tyrosine-protein phosphatase N2 (PTPRN2), found in Macaca nemestrina (Pig-tailed macaque).